Here is a 168-residue protein sequence, read N- to C-terminus: Cell division inhibitor SulA (168 aa).

The segment at 106–112 (ALQTGNY) is ftsZ binding. Residues 161-168 (KIHSSLYH) are lon protease binding.

It belongs to the SulA family. Interacts with FtsZ. In terms of processing, is rapidly cleaved and degraded by the Lon protease once DNA damage is repaired.

In terms of biological role, component of the SOS system and an inhibitor of cell division. Accumulation of SulA causes rapid cessation of cell division and the appearance of long, non-septate filaments. In the presence of GTP, binds a polymerization-competent form of FtsZ in a 1:1 ratio, thus inhibiting FtsZ polymerization and therefore preventing it from participating in the assembly of the Z ring. This mechanism prevents the premature segregation of damaged DNA to daughter cells during cell division. In Serratia marcescens, this protein is Cell division inhibitor SulA.